The sequence spans 119 residues: MSYIQKRGQNTAWRTALMRNLTTELIINESLEVTQTRAKELRRHFDHMITLAKRGDLHSRRQAASWLRDIDADKKETALQKLFNKLAKKYENRNGGYTSILKLDNRKGDNAPMVIIKLI.

This sequence belongs to the bacterial ribosomal protein bL17 family. Part of the 50S ribosomal subunit. Contacts protein L32.

This chain is Large ribosomal subunit protein bL17, found in Mycoplasma mycoides subsp. mycoides SC (strain CCUG 32753 / NCTC 10114 / PG1).